The sequence spans 168 residues: Phosphopantetheine adenylyltransferase (168 aa).

Residue threonine 17 participates in substrate binding. ATP-binding positions include 17–18 (TF) and histidine 25. Residues lysine 49, leucine 81, and arginine 95 each coordinate substrate. Residues 96-98 (GLR), glutamate 106, and 131-137 (LMYISST) each bind ATP.

The protein belongs to the bacterial CoaD family. Homohexamer. Requires Mg(2+) as cofactor.

The protein localises to the cytoplasm. The enzyme catalyses (R)-4'-phosphopantetheine + ATP + H(+) = 3'-dephospho-CoA + diphosphate. The protein operates within cofactor biosynthesis; coenzyme A biosynthesis; CoA from (R)-pantothenate: step 4/5. In terms of biological role, reversibly transfers an adenylyl group from ATP to 4'-phosphopantetheine, yielding dephospho-CoA (dPCoA) and pyrophosphate. This Legionella pneumophila (strain Paris) protein is Phosphopantetheine adenylyltransferase.